The sequence spans 333 residues: Large ribosomal subunit protein uL3 (333 aa).

Basic residues-rich tracts occupy residues 1–10 (MGMKRNRPRR) and 17–26 (PRKRAKRPVP). The interval 1 to 29 (MGMKRNRPRRGSLAFSPRKRAKRPVPKIR) is disordered.

It belongs to the universal ribosomal protein uL3 family. In terms of assembly, part of the 50S ribosomal subunit. Forms a cluster with proteins L14 and L24e.

In terms of biological role, one of the primary rRNA binding proteins, it binds directly near the 3'-end of the 23S rRNA, where it nucleates assembly of the 50S subunit. This is Large ribosomal subunit protein uL3 from Methanococcus aeolicus (strain ATCC BAA-1280 / DSM 17508 / OCM 812 / Nankai-3).